A 660-amino-acid chain; its full sequence is Glutenin, high molecular weight subunit 12 (660 aa).

The N-terminal stretch at 1–21 is a signal peptide; that stretch reads MAKRLVLFAAVVIALVALTTA. Over residues 127-136 the composition is skewed to polar residues; the sequence is YYPSVTSPRQ. The disordered stretch occupies residues 127-660; that stretch reads YYPSVTSPRQ…EGGDALSASQ (534 aa). 4 stretches are compositionally biased toward low complexity: residues 141–166, 187–200, 208–248, and 255–275; these read PGQA…QGQQ, QGYY…PGQG, QGYY…WQQG, and QQLG…GQQG. The span at 276-286 shows a compositional bias: polar residues; the sequence is HYPTSLQQPGQ. Positions 296–365 are enriched in low complexity; that stretch reads QQQPAQGQQG…QQQPGQGQQG (70 aa). The segment covering 370-384 has biased composition (polar residues); the sequence is SLQQPGQQGHYPTSL. 4 stretches are compositionally biased toward low complexity: residues 385–426, 478–514, 522–535, and 551–577; these read QQLG…GQQG, PGQR…PGQG, QGYY…PGQG, and QQTG…GQQG. The segment covering 590–604 has biased composition (gly residues); sequence QQSGQGQQSGQGHQP.

It belongs to the gliadin/glutenin family. In terms of assembly, disulfide-bridge linked aggregates.

In terms of biological role, glutenins are high-molecular weight seed storage proteins of wheat endosperm. Thought to be responsible for the visco-elastic property of wheat dough. This Triticum aestivum (Wheat) protein is Glutenin, high molecular weight subunit 12.